Reading from the N-terminus, the 433-residue chain is Enolase (433 aa).

Residue glutamine 166 coordinates (2R)-2-phosphoglycerate. The Proton donor role is filled by glutamate 208. The Mg(2+) site is built by aspartate 245, glutamate 289, and aspartate 316. Positions 341, 370, 371, and 392 each coordinate (2R)-2-phosphoglycerate. Catalysis depends on lysine 341, which acts as the Proton acceptor.

It belongs to the enolase family. Requires Mg(2+) as cofactor.

It is found in the cytoplasm. The protein resides in the secreted. Its subcellular location is the cell surface. The catalysed reaction is (2R)-2-phosphoglycerate = phosphoenolpyruvate + H2O. It participates in carbohydrate degradation; glycolysis; pyruvate from D-glyceraldehyde 3-phosphate: step 4/5. Its function is as follows. Catalyzes the reversible conversion of 2-phosphoglycerate (2-PG) into phosphoenolpyruvate (PEP). It is essential for the degradation of carbohydrates via glycolysis. The chain is Enolase from Acetivibrio thermocellus (strain ATCC 27405 / DSM 1237 / JCM 9322 / NBRC 103400 / NCIMB 10682 / NRRL B-4536 / VPI 7372) (Clostridium thermocellum).